The primary structure comprises 210 residues: Ovomucoid (210 aa).

Positions 1 to 24 (MAMAGVFVLFSFVLCGFLPDAAFG) are cleaved as a signal peptide. 3 consecutive Kazal-like domains span residues 25–88 (AEVD…ECKE), 89–153 (TVPM…GCRK), and 156–210 (AAVS…FGKC). 3 disulfides stabilise this stretch: C29–C68, C46–C65, and C54–C86. The N-linked (GlcNAc...) asparagine glycan is linked to N34. N-linked (GlcNAc...) asparagine glycosylation is found at N77, N93, and N99. 6 disulfide bridges follow: C94-C133, C111-C130, C119-C151, C162-C192, C170-C189, and C178-C210. N-linked (GlcNAc...) asparagine; partial glycosylation occurs at N199.

It localises to the secreted. Functionally, serine protease inhibitor. Inhibits trypsin. This chain is Ovomucoid, found in Gallus gallus (Chicken).